The chain runs to 567 residues: Putative laccase-17 (567 aa).

An N-terminal signal peptide occupies residues 1-22 (MPSRGCSCWLLSLALLCSLAAA). Plastocyanin-like domains follow at residues 30–146 (VIRE…PRDG) and 158–310 (ELAP…YGAA). N-linked (GlcNAc...) asparagine glycosylation occurs at Asn76. Cu cation is bound by residues His80, His82, His125, and His127. N-linked (GlcNAc...) asparagine glycosylation is found at Asn187, Asn241, Asn298, Asn312, Asn327, Asn365, Asn368, Asn378, Asn388, and Asn430. The region spanning 415 to 551 (DFPANPPVQF…AMAFLVDDGV (137 aa)) is the Plastocyanin-like 3 domain. Cu cation-binding residues include His468, His471, His473, His530, Cys531, His532, and His536.

It belongs to the multicopper oxidase family. It depends on Cu cation as a cofactor.

It is found in the secreted. It localises to the extracellular space. Its subcellular location is the apoplast. The catalysed reaction is 4 hydroquinone + O2 = 4 benzosemiquinone + 2 H2O. In terms of biological role, lignin degradation and detoxification of lignin-derived products. The polypeptide is Putative laccase-17 (LAC17) (Oryza sativa subsp. japonica (Rice)).